Here is a 400-residue protein sequence, read N- to C-terminus: NADPH dehydrogenase 3 (400 aa).

Residues Thr-38 and Gln-115 each coordinate FMN. Positions 192 and 195 each coordinate substrate. Catalysis depends on Tyr-197, which acts as the Proton donor. 2 residues coordinate FMN: Arg-244 and Arg-349. Tyr-376 lines the substrate pocket.

In terms of assembly, homodimer or heterodimer with OYE2. Requires FMN as cofactor.

It carries out the reaction A + NADPH + H(+) = AH2 + NADP(+). In terms of biological role, flavin-dependent enoate reductase that catalyzes the chemo- and stereoslective hydrogenation of electron-poor alkenes. The enzyme is reduced by NADPH, and oxygen, quinones, and alpha,beta-unsaturated aldehydes and ketones can act as electron acceptors to complete catalytic turnover. The physiological oxidant remains elusive. Has a prooxidant activity, increasing reactive oxygen species (ROS) levels when overexpressed. Formation of OYE2-OYE3 heterodimers contribute to the induction of programmed cell death upon oxidative stress. This is NADPH dehydrogenase 3 from Saccharomyces cerevisiae (strain ATCC 204508 / S288c) (Baker's yeast).